Reading from the N-terminus, the 87-residue chain is RNA-binding protein Hfq (87 aa).

Residues 9–68 (DPFLNALRRERIPVSIYLVNGIKLQGQIESFDQFVILLKNTVSQMVYKHAISTVVPARAV) form the Sm domain.

Belongs to the Hfq family. Homohexamer.

Functionally, RNA chaperone that binds small regulatory RNA (sRNAs) and mRNAs to facilitate mRNA translational regulation in response to envelope stress, environmental stress and changes in metabolite concentrations. Also binds with high specificity to tRNAs. The protein is RNA-binding protein Hfq of Aeromonas salmonicida (strain A449).